The sequence spans 118 residues: Large ribosomal subunit protein uL18 (118 aa).

It belongs to the universal ribosomal protein uL18 family. In terms of assembly, part of the 50S ribosomal subunit; part of the 5S rRNA/L5/L18/L25 subcomplex. Contacts the 5S and 23S rRNAs.

In terms of biological role, this is one of the proteins that bind and probably mediate the attachment of the 5S RNA into the large ribosomal subunit, where it forms part of the central protuberance. In Rickettsia felis (strain ATCC VR-1525 / URRWXCal2) (Rickettsia azadi), this protein is Large ribosomal subunit protein uL18.